The following is a 101-amino-acid chain: Urease subunit beta (101 aa).

Belongs to the urease beta subunit family. In terms of assembly, heterotrimer of UreA (gamma), UreB (beta) and UreC (alpha) subunits. Three heterotrimers associate to form the active enzyme.

It localises to the cytoplasm. The catalysed reaction is urea + 2 H2O + H(+) = hydrogencarbonate + 2 NH4(+). Its pathway is nitrogen metabolism; urea degradation; CO(2) and NH(3) from urea (urease route): step 1/1. The protein is Urease subunit beta of Azotobacter vinelandii (strain DJ / ATCC BAA-1303).